The chain runs to 1140 residues: MSHHYVVTAQKPTAVVACLTGNFTSPTDLNLIIARNNQVEIDLVTPEGLRPLKEININGTIAVMRHFRPPDSNKDLLFILTRRYNVMILEARMVNDVITVVTKANGNVSDSVGIPSEGGVIAAIDPKARVIGMCLYQGLFTIIPMDKDASELKATNLRMDELNVYDVEFLHGCLNPTVIVIHKDSDGRHVKSHEINLRDKEFMKIAWKQDNVETEATMLIPVPSPIGGVIVIGRESIVYHDGSNYHAVAPLTFRQSTINCYARVSSNGLRYLLGNMDGQLYMLFLGTAETSKGVTVKDIKVEQLGEISIPECITYLDNGFLYIGARHGDSQLVRLNSEAIDGSYVVPVENFTNLAPILDIAVVDLDRQGQGQIITCSGSFKDGSLRIIRIGIGIQEHACIDLPGIKGMWSLKVGVDESPYENTLVLAFVGHTRILTLSGEEVEETEIPGFASDLQTFLCSNVDYDQLIQVTSDSVRLVSSATKALVAEWRPTGDRTIGVVSCNTTQILVASACDIFYIVIEDGSLREQSRRTLAYEVACLDITPLDETQKKSDLVAVGLWTDISAVILSLPDLETIYTEKLSGEIIPRSILMTTFEGIHYLLCALGDGSMYYFIMDQTTGQLTDKKKVTLGTQPTTLRTFRSLSTTNVFACSDRPTVIYSSNHKLVFSNVNLKEVNHMCSLNAQAYPDSLALANKNAVILGTIDEIQKLHIRTVPLGEGPRRIAYQESSQTFAVSTLRIDVHGRGGAKPLRNSASTQAQNITCSSNFLPKPGGGNSTAANAEVGQEIDVHNLLVIDQNTFEVLHAHQFVAPETISSLMSAKLGDDPNTYYVVATSLVIPEEPEPKVGRIIIFHYHENKLTQVAETKVDGTCYALVEFNGKVLAGIGSFVRLYEWTNEKELRMECNIQNMIAALFLKAKGDFILVGDLMRSITLLQHKQMEGIFVEIARDCEPKWMRAVEILDDDTFLGSETNGNLFVCQKDSAATTDEERQLLPELARFHLGDTVNVFRHGSLVMQNVGERTTPINGCVLYGTCNGAIGIVTQIPQDFYDFLHGLEERLKKIIKSVGKIEHTYYRNFQINSKVEPSEGFIDGDLIESFLDLSRDKMRDAVQGLELTLNGERKSADVEDVIKIVEDLTRMH.

This sequence belongs to the DDB1 family. Component of the UV-DDB complex which includes DDB1 and DDB2; the heterodimer dimerizes to give rise to a heterotetramer when bound to damaged DNA. The UV-DDB complex interacts with monoubiquitinated histone H2A and binds to XPC via the DDB2 subunit. Component of numerous DCX (DDB1-CUL4-X-box) E3 ubiquitin-protein ligase complexes which consist of a core of DDB1, CUL4A or CUL4B and RBX1. DDB1 may recruit specific substrate targeting subunits to the DCX complex. These substrate targeting subunits are generally known as DCAF (DDB1- and CUL4-associated factor) or CDW (CUL4-DDB1-associated WD40-repeat) proteins. Interacts with Fbw5 and gig. May interact with ohgt.

The protein resides in the cytoplasm. Its subcellular location is the nucleus. It participates in protein modification; protein ubiquitination. In terms of biological role, protein, which is both involved in DNA repair and protein ubiquitination, as part of the UV-DDB complex and DCX (DDB1-CUL4-X-box) complexes, respectively. Core component of the UV-DDB complex (UV-damaged DNA-binding protein complex), a complex that recognizes UV-induced DNA damage and recruit proteins of the nucleotide excision repair pathway (the NER pathway) to initiate DNA repair. The UV-DDB complex preferentially binds to cyclobutane pyrimidine dimers (CPD), 6-4 photoproducts (6-4 PP), apurinic sites and short mismatches. Also functions as a component of numerous distinct DCX (DDB1-CUL4-X-box) E3 ubiquitin-protein ligase complexes which mediate the ubiquitination and subsequent proteasomal degradation of target proteins. The functional specificity of the DCX E3 ubiquitin-protein ligase complex is determined by the variable substrate recognition component recruited by DDB1. Required for degradation of gig. Required for genomic stability in the face of endogenous DNA lesions and for the response to MMS-induced DNA damage. Required for normal wing development. The chain is DNA damage-binding protein 1 (pic) from Drosophila melanogaster (Fruit fly).